A 117-amino-acid polypeptide reads, in one-letter code: Large ribosomal subunit protein uL24 (117 aa).

This sequence belongs to the universal ribosomal protein uL24 family. As to quaternary structure, part of the 50S ribosomal subunit.

Functionally, one of two assembly initiator proteins, it binds directly to the 5'-end of the 23S rRNA, where it nucleates assembly of the 50S subunit. Its function is as follows. One of the proteins that surrounds the polypeptide exit tunnel on the outside of the subunit. The sequence is that of Large ribosomal subunit protein uL24 from Trichormus variabilis (strain ATCC 29413 / PCC 7937) (Anabaena variabilis).